The chain runs to 205 residues: Adenylyl-sulfate kinase (205 aa).

31–38 serves as a coordination point for ATP; the sequence is GLSGAGKS. Serine 105 serves as the catalytic Phosphoserine intermediate.

The protein belongs to the APS kinase family.

It carries out the reaction adenosine 5'-phosphosulfate + ATP = 3'-phosphoadenylyl sulfate + ADP + H(+). It participates in sulfur metabolism; hydrogen sulfide biosynthesis; sulfite from sulfate: step 2/3. Catalyzes the synthesis of activated sulfate. This chain is Adenylyl-sulfate kinase, found in Shewanella sp. (strain ANA-3).